A 175-amino-acid polypeptide reads, in one-letter code: Adenine phosphoribosyltransferase (175 aa).

This sequence belongs to the purine/pyrimidine phosphoribosyltransferase family. In terms of assembly, homodimer.

The protein localises to the cytoplasm. The catalysed reaction is AMP + diphosphate = 5-phospho-alpha-D-ribose 1-diphosphate + adenine. It functions in the pathway purine metabolism; AMP biosynthesis via salvage pathway; AMP from adenine: step 1/1. Catalyzes a salvage reaction resulting in the formation of AMP, that is energically less costly than de novo synthesis. This is Adenine phosphoribosyltransferase from Lactobacillus acidophilus (strain ATCC 700396 / NCK56 / N2 / NCFM).